Here is a 276-residue protein sequence, read N- to C-terminus: Hydroxycinnamoyl-CoA hydratase-lyase (276 aa).

Acetyl-CoA contacts are provided by K29, A68, M70, and L72. Y75 contributes to the vanillin binding site. Positions 120, 142, and 146 each coordinate acetyl-CoA. 2 residues coordinate vanillin: G151 and Y239.

It belongs to the enoyl-CoA hydratase/isomerase family. As to quaternary structure, homohexamer; dimer of trimers.

The catalysed reaction is (E)-feruloyl-CoA + H2O = vanillin + acetyl-CoA. It catalyses the reaction (E)-caffeoyl-CoA + H2O = 3,4-dihydroxybenzaldehyde + acetyl-CoA. It carries out the reaction (E)-4-coumaroyl-CoA + H2O = 4-hydroxybenzaldehyde + acetyl-CoA. The enzyme catalyses (E)-feruloyl-CoA + H2O = 3-hydroxy-3-(4-hydroxy-3-methoxyphenyl)propanoyl-CoA. The catalysed reaction is 3-hydroxy-3-(4-hydroxy-3-methoxyphenyl)propanoyl-CoA = vanillin + acetyl-CoA. It catalyses the reaction (E)-caffeoyl-CoA + H2O = 3-hydroxy-3-(3,4-dihydroxyphenyl)propanoyl-CoA. It carries out the reaction 3-hydroxy-3-(3,4-dihydroxyphenyl)propanoyl-CoA = 3,4-dihydroxybenzaldehyde + acetyl-CoA. The enzyme catalyses (E)-4-coumaroyl-CoA + H2O = 3-hydroxy-3-(4-hydroxyphenyl)propanoyl-CoA. The catalysed reaction is 3-hydroxy-3-(4-hydroxyphenyl)propanoyl-CoA = 4-hydroxybenzaldehyde + acetyl-CoA. Functionally, catalyzes the hydration of the acyl-CoA thioester of ferulic acid and the subsequent retro-aldol cleavage of the hydrated intermediate to yield vanillin (4-hydroxy-3-methoxy-benzaldehyde). The enzyme is also active with caffeoyl-CoA and 4-coumaroyl-CoA producing 3,4-dihydroxybenzaldehyde and 4-hydroxybenzaldehyde, respectively. This chain is Hydroxycinnamoyl-CoA hydratase-lyase, found in Pseudomonas fluorescens.